We begin with the raw amino-acid sequence, 84 residues long: Large ribosomal subunit protein bL27 (84 aa).

Residues 1–22 (MAHKKAGGSTRNGRDSESKRLG) form a disordered region.

The protein belongs to the bacterial ribosomal protein bL27 family.

This Shewanella oneidensis (strain ATCC 700550 / JCM 31522 / CIP 106686 / LMG 19005 / NCIMB 14063 / MR-1) protein is Large ribosomal subunit protein bL27.